A 104-amino-acid polypeptide reads, in one-letter code: Replication restart protein PriB (104 aa).

The SSB domain maps to 1–101 (MTNRLVLSGT…LHAEQIELID (101 aa)).

It belongs to the PriB family. Homodimer. Interacts with PriA and DnaT. Component of the replication restart primosome. Primosome assembly occurs via a 'hand-off' mechanism. PriA binds to replication forks, subsequently PriB then DnaT bind; DnaT then displaces ssDNA to generate the helicase loading substrate.

Functionally, involved in the restart of stalled replication forks, which reloads the replicative helicase on sites other than the origin of replication; the PriA-PriB pathway is the major replication restart pathway. During primosome assembly it facilitates complex formation between PriA and DnaT on DNA; stabilizes PriA on DNA. Stimulates the DNA unwinding activity of PriA helicase. This chain is Replication restart protein PriB, found in Escherichia coli (strain ATCC 8739 / DSM 1576 / NBRC 3972 / NCIMB 8545 / WDCM 00012 / Crooks).